The following is a 414-amino-acid chain: Arrestin domain-containing protein 3 (414 aa).

2 short sequence motifs (PPxY motif) span residues 346 to 349 (PPSY) and 391 to 394 (PPLY). A disordered region spans residues 393–414 (LYSEIDPNPDQSADDRPSCPSR). The span at 405–414 (ADDRPSCPSR) shows a compositional bias: basic and acidic residues.

This sequence belongs to the arrestin family. In terms of assembly, interacts (via PPxY motifs) with NEDD4 (via WW domains). Interacts with ADRB2. Interacts with ADRB3. Interacts with HGS (via PPxY motifs). Does not bind TXN (thioredoxin). Interacts with ITCH. Interacts with WWP1 (via WW domains). Highly expressed in skeletal muscle, placenta, kidney, lung, liver, blood, adrenal gland, lymph node, mammary gland, thyroid, and trachea. Very low levels in colon, thymus, spleen, small intestine, bladder and bone marrow. Strong expression in differentiated adipocytes compared to preadipocytes. Detected in omental fat and subcutaneous fat tissue.

It localises to the cytoplasm. Its subcellular location is the cell membrane. The protein resides in the lysosome. It is found in the endosome. The protein localises to the early endosome. Its function is as follows. Adapter protein that plays a role in regulating cell-surface expression of adrenergic receptors and probably also other G protein-coupled receptors. Plays a role in NEDD4-mediated ubiquitination and endocytosis af activated ADRB2 and subsequent ADRB2 degradation. May recruit NEDD4 to ADRB2. Alternatively, may function as adapter protein that does not play a major role in recruiting NEDD4 to ADRB2, but rather plays a role in a targeting ADRB2 to endosomes. In Homo sapiens (Human), this protein is Arrestin domain-containing protein 3 (ARRDC3).